A 551-amino-acid polypeptide reads, in one-letter code: MPQLNGGGGDELGANDEMISFKDEGEQEDKISENVSAERGLDDVKSSLVSESENNSSSSDSEQTERRPQPRADLESYEKAREYFTEALRRQQDGGFFKSPHYPGYPFLMIPDLANPYLSNGALSPSARTYLQMKWPLLDVPGSAALKDSQSPSPGHLSNKVPVVQHAHMHPLTPLITYSNEFPPGTPPAHLSPEILDPKTGIPRTPHPAELSPYYPLSPGTVGQIPHPLGWLVPQQGQHMYPITAGGFRHPYPALAMNASMSSLVSSRFSPHLVPHHPHGLHQTGIPHPAIVSPVIKQEPNGELSPPVNTKSPGPNKKDEDKKPHIKKPLNAFMLYMKEMRAKVVAECTLKENAAINQILGRRWHSLSREEQAKYYELARKERQLHSQLYPGWSARDNYGKRKKRKRDNKTDSTPEDFSMRSKKPCVQYLPQEKMIDSPGSSHGSMLDSPATPSAALASPAAPAATHSEQAQPLSLTTKPERFPLLSKPPPSSSSSSSSSSSSGLPTPPLLSRPLPFALLTPPSPFHQAALHSHHALFQSQPLSLVTKSSD.

Gly residues predominate over residues 1–11 (MPQLNGGGGDE). 3 disordered regions span residues 1 to 76 (MPQL…DLES), 298 to 326 (QEPNGELSPPVNTKSPGPNKKDEDKKPHI), and 392 to 525 (GWSA…PPSP). Residues 19-32 (ISFKDEGEQEDKIS) show a composition bias toward basic and acidic residues. Over residues 46 to 61 (SSLVSESENNSSSSDS) the composition is skewed to low complexity. Basic and acidic residues predominate over residues 63–76 (QTERRPQPRADLES). The HMG box DNA-binding region spans 326 to 394 (IKKPLNAFML…LHSQLYPGWS (69 aa)). Low complexity predominate over residues 449–468 (SPATPSAALASPAAPAATHS). The segment covering 469 to 478 (EQAQPLSLTT) has biased composition (polar residues). Residues 493–505 (SSSSSSSSSSSGL) show a composition bias toward low complexity.

This sequence belongs to the TCF/LEF family. Interacts with ctnnb1.

It localises to the nucleus. Its function is as follows. Participates in the Wnt signaling pathway. Probably binds to DNA and acts as a repressor in the absence of ctnnb1, and possibly as an activator in its presence. Regulates anterior-posterior patterning in the neuroectoderm by repressing posterior neural fates. Also required for hindbrain morphogenesis. This is Transcription factor 7-like 1-B (tcf7l1b) from Danio rerio (Zebrafish).